The primary structure comprises 132 residues: MVMSDPIADLLTRIRNANVVRHEVVEVPSSNIKKAIANIMLTEGYIRDLEEYRDGSVDMLRISMKYGQNKERIITGLKRISKPGLRVYCRKDETPKVLNGLGVAVVSTSKGIVTDREARKLGVGGEVLCYIW.

Belongs to the universal ribosomal protein uS8 family. Part of the 30S ribosomal subunit. Contacts proteins S5 and S12.

Functionally, one of the primary rRNA binding proteins, it binds directly to 16S rRNA central domain where it helps coordinate assembly of the platform of the 30S subunit. This Clostridium botulinum (strain 657 / Type Ba4) protein is Small ribosomal subunit protein uS8.